The primary structure comprises 234 residues: Lipoprotein-releasing system ATP-binding protein LolD (234 aa).

Positions 7-233 (LQCINLCKRY…LQHHLTLVGA (227 aa)) constitute an ABC transporter domain. Position 43–50 (43–50 (GSSGSGKS)) interacts with ATP.

Belongs to the ABC transporter superfamily. Lipoprotein translocase (TC 3.A.1.125) family. As to quaternary structure, the complex is composed of two ATP-binding proteins (LolD) and two transmembrane proteins (LolC and LolE).

Its subcellular location is the cell inner membrane. Part of the ABC transporter complex LolCDE involved in the translocation of mature outer membrane-directed lipoproteins, from the inner membrane to the periplasmic chaperone, LolA. Responsible for the formation of the LolA-lipoprotein complex in an ATP-dependent manner. This is Lipoprotein-releasing system ATP-binding protein LolD from Yersinia pestis bv. Antiqua (strain Antiqua).